We begin with the raw amino-acid sequence, 364 residues long: tRNA 2-selenouridine synthase (364 aa).

The 124-residue stretch at L14–I137 folds into the Rhodanese domain. The S-selanylcysteine intermediate role is filled by C97.

This sequence belongs to the SelU family. As to quaternary structure, monomer.

It carries out the reaction 5-methylaminomethyl-2-thiouridine(34) in tRNA + selenophosphate + (2E)-geranyl diphosphate + H2O + H(+) = 5-methylaminomethyl-2-selenouridine(34) in tRNA + (2E)-thiogeraniol + phosphate + diphosphate. The enzyme catalyses 5-methylaminomethyl-2-thiouridine(34) in tRNA + (2E)-geranyl diphosphate = 5-methylaminomethyl-S-(2E)-geranyl-thiouridine(34) in tRNA + diphosphate. It catalyses the reaction 5-methylaminomethyl-S-(2E)-geranyl-thiouridine(34) in tRNA + selenophosphate + H(+) = 5-methylaminomethyl-2-(Se-phospho)selenouridine(34) in tRNA + (2E)-thiogeraniol. The catalysed reaction is 5-methylaminomethyl-2-(Se-phospho)selenouridine(34) in tRNA + H2O = 5-methylaminomethyl-2-selenouridine(34) in tRNA + phosphate. Involved in the post-transcriptional modification of the uridine at the wobble position (U34) of tRNA(Lys), tRNA(Glu) and tRNA(Gln). Catalyzes the conversion of 2-thiouridine (S2U-RNA) to 2-selenouridine (Se2U-RNA). Acts in a two-step process involving geranylation of 2-thiouridine (S2U) to S-geranyl-2-thiouridine (geS2U) and subsequent selenation of the latter derivative to 2-selenouridine (Se2U) in the tRNA chain. The sequence is that of tRNA 2-selenouridine synthase from Escherichia coli O8 (strain IAI1).